Here is a 140-residue protein sequence, read N- to C-terminus: Sex-regulated protein janus-B (140 aa).

Arg-42 lines the substrate pocket. His-69 (proton acceptor) is an active-site residue. A substrate-binding site is contributed by 110-112 (SRT).

It belongs to the janus family. As to expression, germline cells of adult males.

Functionally, janA and janB regulate somatic sex differentiation. This Drosophila melanogaster (Fruit fly) protein is Sex-regulated protein janus-B (janB).